A 718-amino-acid polypeptide reads, in one-letter code: Neutral ceramidase B (718 aa).

The signal sequence occupies residues 1-20 (MINSFKKLIILISLVIILLS). N-linked (GlcNAc...) asparagine glycans are attached at residues N224 and N252. The active-site Nucleophile is the S298. N358, N378, N391, N421, N422, N577, N610, and N614 each carry an N-linked (GlcNAc...) asparagine glycan.

This sequence belongs to the neutral ceramidase family.

It is found in the secreted. The catalysed reaction is an N-acylsphing-4-enine + H2O = sphing-4-enine + a fatty acid. Its function is as follows. Hydrolyzes the sphingolipid ceramide into sphingosine and free fatty acid. This Dictyostelium discoideum (Social amoeba) protein is Neutral ceramidase B (dcd2B).